A 348-amino-acid polypeptide reads, in one-letter code: Structural glycoprotein p40 (348 aa).

It belongs to the baculoviridae gp41 family. Post-translationally, O-glycosylated; contains N-acetylglucosamine side chains.

This is Structural glycoprotein p40 (P40) from Bombyx mori nuclear polyhedrosis virus (BmNPV).